A 147-amino-acid polypeptide reads, in one-letter code: MTEGLFISCSAVRVKPNRRAGLRRRSPAFLLSANQKTRLFALGSSPRCGPRANGEEASSCAWVSRAPRAACARAKPASRAPEGPVSRKTRGGEAALASARPATDCLRSGLAVERRRKPNSRPAPGVGSLPGSRPQDPQGAAGRRLSP.

Low complexity predominate over residues 72 to 81 (ARAKPASRAP). The segment at 72 to 147 (ARAKPASRAP…QGAAGRRLSP (76 aa)) is disordered.

This is an uncharacterized protein from Homo sapiens (Human).